A 92-amino-acid chain; its full sequence is Probable Fe(2+)-trafficking protein (92 aa).

The protein belongs to the Fe(2+)-trafficking protein family.

Could be a mediator in iron transactions between iron acquisition and iron-requiring processes, such as synthesis and/or repair of Fe-S clusters in biosynthetic enzymes. The sequence is that of Probable Fe(2+)-trafficking protein from Shewanella loihica (strain ATCC BAA-1088 / PV-4).